Here is a 448-residue protein sequence, read N- to C-terminus: Probable glycine dehydrogenase (decarboxylating) subunit 1 (448 aa).

It belongs to the GcvP family. N-terminal subunit subfamily. As to quaternary structure, the glycine cleavage system is composed of four proteins: P, T, L and H. In this organism, the P 'protein' is a heterodimer of two subunits.

It catalyses the reaction N(6)-[(R)-lipoyl]-L-lysyl-[glycine-cleavage complex H protein] + glycine + H(+) = N(6)-[(R)-S(8)-aminomethyldihydrolipoyl]-L-lysyl-[glycine-cleavage complex H protein] + CO2. Functionally, the glycine cleavage system catalyzes the degradation of glycine. The P protein binds the alpha-amino group of glycine through its pyridoxal phosphate cofactor; CO(2) is released and the remaining methylamine moiety is then transferred to the lipoamide cofactor of the H protein. This is Probable glycine dehydrogenase (decarboxylating) subunit 1 from Geobacillus kaustophilus (strain HTA426).